A 340-amino-acid chain; its full sequence is Uroporphyrinogen decarboxylase (340 aa).

Substrate is bound by residues 21-25 (RQAGR), Phe40, Asp71, Tyr147, Ser202, and His316.

Belongs to the uroporphyrinogen decarboxylase family. As to quaternary structure, homodimer.

It localises to the cytoplasm. It catalyses the reaction uroporphyrinogen III + 4 H(+) = coproporphyrinogen III + 4 CO2. Its pathway is porphyrin-containing compound metabolism; protoporphyrin-IX biosynthesis; coproporphyrinogen-III from 5-aminolevulinate: step 4/4. Its function is as follows. Catalyzes the decarboxylation of four acetate groups of uroporphyrinogen-III to yield coproporphyrinogen-III. The polypeptide is Uroporphyrinogen decarboxylase (Wolinella succinogenes (strain ATCC 29543 / DSM 1740 / CCUG 13145 / JCM 31913 / LMG 7466 / NCTC 11488 / FDC 602W) (Vibrio succinogenes)).